Reading from the N-terminus, the 180-residue chain is Nucleoside triphosphate/diphosphate phosphatase (180 aa).

Residue arginine 26 is the Proton donor of the active site. Residues asparagine 90, aspartate 106, aspartate 108, aspartate 110, aspartate 123, and glutamate 126 each contribute to the Mg(2+) site.

This sequence belongs to the Ntdp family. The cofactor is Mg(2+).

The catalysed reaction is a ribonucleoside 5'-triphosphate + H2O = a ribonucleoside 5'-diphosphate + phosphate + H(+). The enzyme catalyses a ribonucleoside 5'-diphosphate + H2O = a ribonucleoside 5'-phosphate + phosphate + H(+). In terms of biological role, has nucleoside phosphatase activity towards nucleoside triphosphates and nucleoside diphosphates. This chain is Nucleoside triphosphate/diphosphate phosphatase, found in Staphylococcus aureus (strain Mu3 / ATCC 700698).